A 259-amino-acid chain; its full sequence is Polycomb group RING finger protein 1 (259 aa).

At Ala-2 the chain carries N-acetylalanine. The residue at position 3 (Ser-3) is a Phosphoserine. Lys-24 is covalently cross-linked (Glycyl lysine isopeptide (Lys-Gly) (interchain with G-Cter in SUMO2)). An RING-type zinc finger spans residues 47–86 (CCLCAGYFVDATTITECLHTFCKSCIVKYLQTSKYCPMCN). The interval 86 to 247 (NIKIHETQPL…LSHWFGKPSP (162 aa)) is necessary for repressor activity. A Glycyl lysine isopeptide (Lys-Gly) (interchain with G-Cter in SUMO2) cross-link involves residue Lys-88. Positions 150–255 (LPFSSFDHSK…SPLLLQYSVK (106 aa)) are required for the interaction with the KDM2B-SKP1 heterodimeric complex. The segment at 167 to 255 (EQLSLCLERL…SPLLLQYSVK (89 aa)) is RING-finger and WD40-associated ubiquitin-like domain (RAWUL); sufficient for interaction with BCOR and BCORL1.

In terms of assembly, interacts with BCORL1, forming heterodimers. The PCGF1-BCORL1 heterodimeric complex interacts with the KDM2B-SKP1 heterodimeric complex to form a homotetrameric polycomb repression complex 1 (PRC1.1). Component of the repressive BCOR complex containing a Polycomb group subcomplex at least composed of RYBP, RING1 and RNF2/RING2. Specifically interacts with BCOR, RING1 and RNF2/RING2. Component of a PRC1-like complex. Interacts with CBX6, CBX7 and CBX8. Interacts with DPPA4, NANOG, POU5F1 and RYBP.

It localises to the nucleus. Functionally, component of the Polycomb group (PcG) multiprotein BCOR complex, a complex required to maintain the transcriptionally repressive state of some genes, such as BCL6 and the cyclin-dependent kinase inhibitor, CDKN1A. Transcriptional repressor that may be targeted to the DNA by BCL6; this transcription repressor activity may be related to PKC signaling pathway. Represses CDKN1A expression by binding to its promoter, and this repression is dependent on the retinoic acid response element (RARE element). Promotes cell cycle progression and enhances cell proliferation as well. May have a positive role in tumor cell growth by down-regulating CDKN1A. Component of a Polycomb group (PcG) multiprotein PRC1-like complex, a complex class required to maintain the transcriptionally repressive state of many genes, including Hox genes, throughout development. PcG PRC1 complex acts via chromatin remodeling and modification of histones; it mediates monoubiquitination of histone H2A 'Lys-119', rendering chromatin heritably changed in its expressibility. Within the PRC1-like complex, regulates RNF2 ubiquitin ligase activity. Regulates the expression of DPPA4 and NANOG in the NT2 embryonic carcinoma cells. This Bos taurus (Bovine) protein is Polycomb group RING finger protein 1 (PCGF1).